Here is a 502-residue protein sequence, read N- to C-terminus: ATP synthase subunit alpha (502 aa).

169 to 176 (GDRQTGKT) contributes to the ATP binding site.

Belongs to the ATPase alpha/beta chains family. F-type ATPases have 2 components, CF(1) - the catalytic core - and CF(0) - the membrane proton channel. CF(1) has five subunits: alpha(3), beta(3), gamma(1), delta(1), epsilon(1). CF(0) has three main subunits: a(1), b(2) and c(9-12). The alpha and beta chains form an alternating ring which encloses part of the gamma chain. CF(1) is attached to CF(0) by a central stalk formed by the gamma and epsilon chains, while a peripheral stalk is formed by the delta and b chains.

It localises to the cell inner membrane. It carries out the reaction ATP + H2O + 4 H(+)(in) = ADP + phosphate + 5 H(+)(out). Functionally, produces ATP from ADP in the presence of a proton gradient across the membrane. The alpha chain is a regulatory subunit. The sequence is that of ATP synthase subunit alpha from Kosmotoga olearia (strain ATCC BAA-1733 / DSM 21960 / TBF 19.5.1).